The sequence spans 480 residues: Serralysin (480 aa).

Position 181 (H181) interacts with Zn(2+). Residue E182 is part of the active site. Residues H185 and H191 each coordinate Zn(2+). R260, D263, D292, G294, G295, D297, T334, and E336 together coordinate Ca(2+). 2 Hemolysin-type calcium-binding repeats span residues I339 to L356 and K357 to L374.

Belongs to the peptidase M10B family. The cofactor is Zn(2+). Ca(2+) serves as cofactor.

It localises to the secreted. The enzyme catalyses Preferential cleavage of bonds with hydrophobic residues in P1'.. This chain is Serralysin (prtA), found in Photorhabdus laumondii subsp. laumondii (strain DSM 15139 / CIP 105565 / TT01) (Photorhabdus luminescens subsp. laumondii).